A 263-amino-acid chain; its full sequence is 3-methyl-2-oxobutanoate hydroxymethyltransferase (263 aa).

Residues D43 and D82 each contribute to the Mg(2+) site. Residues 43–44 (DS), D82, and K111 each bind 3-methyl-2-oxobutanoate. A Mg(2+)-binding site is contributed by E113. E179 (proton acceptor) is an active-site residue.

This sequence belongs to the PanB family. As to quaternary structure, homodecamer; pentamer of dimers. The cofactor is Mg(2+).

The protein localises to the cytoplasm. The catalysed reaction is 3-methyl-2-oxobutanoate + (6R)-5,10-methylene-5,6,7,8-tetrahydrofolate + H2O = 2-dehydropantoate + (6S)-5,6,7,8-tetrahydrofolate. It participates in cofactor biosynthesis; (R)-pantothenate biosynthesis; (R)-pantoate from 3-methyl-2-oxobutanoate: step 1/2. Catalyzes the reversible reaction in which hydroxymethyl group from 5,10-methylenetetrahydrofolate is transferred onto alpha-ketoisovalerate to form ketopantoate. This is 3-methyl-2-oxobutanoate hydroxymethyltransferase from Neisseria meningitidis serogroup A / serotype 4A (strain DSM 15465 / Z2491).